The following is a 580-amino-acid chain: MLIRFRSKNGTHRVSCQENDLFGTVIEKLVGNLDPNADVDTFTVCEKPGQGIHAVSELADRTVMDLGLKHGDMLILNYSDKPANEKDGVNVEIGSVGIDSKGIRQHRYGPLRIKELAVDEELEKEDGLIPRQKSKLCKHGDRGMCEYCSPLPPWDKEYHEKNKIKHISFHSYLKKLNENANKKENGSSYISPLSEPDFRINKRCHNGHEPWPRGICSKCQPSAITLQQQEFRMVDHVEFQKSEIINEFIQAWRYTGMQRFGYMYGSYSKYDNTPLGIKAVVEAIYEPPQHDEQDGLTMDVEQVKNEMLQIDRQAQEMGLSRIGLIFTDLSDAGAGDGSVFCKRHKDSFFLSSLEVIMAARHQTRHPNVSKYSEQGFFSSKFVTCVISGNLEGEIDISSYQVSTEAEALVTADMISGSTFPSMAYINDTTDERYVPEIFYMKSNEYGITVKENAKPAFPVDYLLVTLTHGFPNTDTETNSKFVSSTGFPWSNRQAMGQSQDYQELKKYLFNVASSGDFNLLHEKISNFHLLLYINSLQILSPDEWKLLIESAVKNEWEESLLKLVSSAGWQTLVMILQESG.

Positions 237 to 377 constitute an MPN domain; sequence VEFQKSEIIN…VSKYSEQGFF (141 aa).

This sequence belongs to the NPL4 family. Component of the heterotrimeric CDC48-NPL4-UFD1 ATPase complex. The CDC48-NPL4-UFD1 ATPase complex interacts with the HRD1 ubiquitin ligase complex composed of the E3 ligase HRD1, its cofactors HRD3, USA1 and DER1, substrate recruiting factor YOS9 and CDC48-binding protein UBX2. Interaction between the complexes is mediated by interaction between CDC48-NPL4-UFD1 complex member CDC48 and HRD1 complex member UBX2. Forms a complex composed of CDC48, NPL4, UFD1, DOA1, SHP1 and deubiquitinase OTU1. Interacts with CDC48, UFD1 and VMS1.

The protein localises to the cytoplasm. It localises to the perinuclear region. The protein resides in the endoplasmic reticulum membrane. It is found in the nucleus membrane. Its function is as follows. Substrate-recruiting cofactor of the CDC48-NPL4-UFD1 segregase. Assists CDC48 in the dislocation of misfolded, polyubiquitinated ERAD substrates that are subsequently delivered to the proteasome for degradation. Involved in the import of nuclear-targeted proteins into the nucleus and the export of poly(A) RNA out of the nucleus. Required for the proteasome-dependent processing/activation of MGA2 and SPT23 transcription factors leading to the subsequent expression of OLE1. Regulates ubiquitin-mediated mitochondria protein degradation. Involved in spindle disassembly probably by promoting the degradation of spindle assemby factors ASE1 and CDC5 at the end of mitosis. The chain is Nuclear protein localization protein 4 (NPL4) from Saccharomyces cerevisiae (strain ATCC 204508 / S288c) (Baker's yeast).